A 243-amino-acid polypeptide reads, in one-letter code: MFSASSLLAVIALAISSVSAAGPSAVPLGTAGNYVILASTGVSTVPQSVITGAVGVSPGTAASLTGFSLILSGTGTFSTSSQVTGQLTGADYGTPTPSILTTAIGDMGTAYINAATRSGPDFLEIYTGALGGTTLLPGLYKWTSSVGASADFTISGTSTDTWIFQIDGTLDVATGKQITLVGGAQAKNIIWVVAGAVNIEVGAKFEGTILAKTAVTFKTGSSLNGRILAQTSVALQSATIVEK.

The first 20 residues, Met1 to Ala20, serve as a signal peptide directing secretion.

The protein belongs to the ice-binding protein family.

Functionally, binds to the surface of ice crystals. Has low thermal hysteresis (TH) activity, which is the ability to lower the freezing point of an aqueous solution below its melting point. The TH activity of this protein is approximately 0.3 degrees Celsius at 11 mM. This is Ice-binding protein K3-B1 from Typhula ishikariensis (Gray snow mold fungus).